Reading from the N-terminus, the 132-residue chain is Small ribosomal subunit protein uS9 (132 aa).

The tract at residues 100-132 (LKSNGLLTRDDRTKERKKPGLKRARKAPQYTKR) is disordered. A compositionally biased stretch (basic residues) spans 114–132 (ERKKPGLKRARKAPQYTKR).

Belongs to the universal ribosomal protein uS9 family.

The sequence is that of Small ribosomal subunit protein uS9 from Dehalococcoides mccartyi (strain ATCC BAA-2266 / KCTC 15142 / 195) (Dehalococcoides ethenogenes (strain 195)).